A 69-amino-acid polypeptide reads, in one-letter code: Large ribosomal subunit protein bL28 (69 aa).

This sequence belongs to the bacterial ribosomal protein bL28 family.

In Oleidesulfovibrio alaskensis (strain ATCC BAA-1058 / DSM 17464 / G20) (Desulfovibrio alaskensis), this protein is Large ribosomal subunit protein bL28.